Reading from the N-terminus, the 240-residue chain is Zein-alpha 19C2 (240 aa).

The N-terminal stretch at 1-21 (MATKIFSLLMLLALSTCVANA) is a signal peptide.

It belongs to the zein family. As to quaternary structure, interacts with OP10 (via N-terminus).

Its function is as follows. Zeins are major seed storage proteins. The sequence is that of Zein-alpha 19C2 from Zea mays (Maize).